A 505-amino-acid chain; its full sequence is MSFVEICLVLATIGLLLFKWSTGTFKAFEGRNLYFEKPYPFLGNMAASALQKASFQKQISEFYNRTRHHKLVGLFNLRTPMIQINDPQLIKKICVKDFDHFPNHQTLNIPNERLVNDMLNVMRDQHWRNMRSVLTPVFTSAKMRNMFTLMNESFAQCLEHLKSSQPIAAGENAFELDMKVLCNKLSNDVIATTAFGLKVNSFDDPENEFHTIGKTLAFSRGLPFLKFMMCLLAPKVFNFFKLTIFDSTNVEYFVRLVVDAMQYREKHNITRPDMIQLLMEAKKESKDNWTDDEIVAQCFIFFFAAFENNSNLICTTAYELLRNLDIQERLYEEVKETQEALKGAPLTYDAAQEMTYMDMVISESLRKWTLSAAADRLCAKDYTLTDDEGTKLFEFKAGDNINIPICGLHWDERFFPQPQRFDPERFSERRKKDLIPYTYLPFGVGPRSCIGNRYAVMQAKGMLYNLMLNYKIEASPRTTRDMWESARGFNIIPTTGFWMQLVSRK.

Heme is bound at residue C449.

It belongs to the cytochrome P450 family. It depends on heme as a cofactor.

Its subcellular location is the endoplasmic reticulum membrane. It localises to the microsome membrane. In terms of biological role, may be involved in the metabolism of insect hormones and in the breakdown of synthetic insecticides. In Drosophila melanogaster (Fruit fly), this protein is Cytochrome P450 9b1 (Cyp9b1).